The chain runs to 98 residues: MEQINLNMITAFTIALMGVLTYRSHLMSTLLCLEGMMLSLFILMVLLISHSHMVSMSMAPLILLVFSACEAGVGLALLVTISHTYGNDYVQNLNLLQC.

The next 3 helical transmembrane spans lie at 1-21 (MEQI…GVLT), 28-48 (STLL…VLLI), and 61-81 (LILL…LVTI).

Belongs to the complex I subunit 4L family. Core subunit of respiratory chain NADH dehydrogenase (Complex I) which is composed of 45 different subunits.

It is found in the mitochondrion inner membrane. The catalysed reaction is a ubiquinone + NADH + 5 H(+)(in) = a ubiquinol + NAD(+) + 4 H(+)(out). Core subunit of the mitochondrial membrane respiratory chain NADH dehydrogenase (Complex I) which catalyzes electron transfer from NADH through the respiratory chain, using ubiquinone as an electron acceptor. Part of the enzyme membrane arm which is embedded in the lipid bilayer and involved in proton translocation. The polypeptide is NADH-ubiquinone oxidoreductase chain 4L (MT-ND4L) (Monodelphis domestica (Gray short-tailed opossum)).